The sequence spans 154 residues: Aspartate carbamoyltransferase regulatory chain (154 aa).

Zn(2+) is bound by residues Cys-111, Cys-116, Cys-139, and Cys-142.

It belongs to the PyrI family. As to quaternary structure, contains catalytic and regulatory chains. Zn(2+) is required as a cofactor.

Involved in allosteric regulation of aspartate carbamoyltransferase. This Parabacteroides distasonis (strain ATCC 8503 / DSM 20701 / CIP 104284 / JCM 5825 / NCTC 11152) protein is Aspartate carbamoyltransferase regulatory chain.